Here is a 202-residue protein sequence, read N- to C-terminus: Probable molybdenum cofactor guanylyltransferase (202 aa).

GTP is bound by residues 13-15 (LAG), Lys-25, Asp-71, and Asp-103. Asp-103 contributes to the Mg(2+) binding site.

This sequence belongs to the MobA family. Requires Mg(2+) as cofactor.

It is found in the cytoplasm. The catalysed reaction is Mo-molybdopterin + GTP + H(+) = Mo-molybdopterin guanine dinucleotide + diphosphate. Functionally, transfers a GMP moiety from GTP to Mo-molybdopterin (Mo-MPT) cofactor (Moco or molybdenum cofactor) to form Mo-molybdopterin guanine dinucleotide (Mo-MGD) cofactor. This chain is Probable molybdenum cofactor guanylyltransferase, found in Opitutus terrae (strain DSM 11246 / JCM 15787 / PB90-1).